We begin with the raw amino-acid sequence, 195 residues long: BAG family molecular chaperone regulator 1A (195 aa).

A Ubiquitin-like domain is found at 6–72 (STVTIHYGNQ…KLGLKNHSKI (67 aa)). The disordered stretch occupies residues 78-98 (HKQQRGSKEKDTVEPAPKAEA). The segment covering 83–98 (GSKEKDTVEPAPKAEA) has biased composition (basic and acidic residues). A BAG domain is found at 109–190 (EIKAIDQYVD…KMLDHVDQTS (82 aa)).

As to quaternary structure, binds to the ATPase domain of HSP70/HSC chaperones.

Functionally, inhibits the chaperone activity of HSP70/HSC70 by promoting substrate release. The polypeptide is BAG family molecular chaperone regulator 1A (bag101) (Schizosaccharomyces pombe (strain 972 / ATCC 24843) (Fission yeast)).